The sequence spans 188 residues: Killer cell lectin-like receptor subfamily G member 1 (188 aa).

Residues 1–33 are Cytoplasmic-facing; sequence MADSSIYSTLELPEAPQVQDESRWKLKAVLHRP. The ITIM motif motif lies at 5 to 10; that stretch reads SIYSTL. Residues 34 to 56 traverse the membrane as a helical; Signal-anchor for type II membrane protein segment; that stretch reads HLSRFAMVALGLLTVILMSLLMY. The Extracellular portion of the chain corresponds to 57–188; the sequence is QRILCCGSKD…LQWICKKVLY (132 aa). The cysteines at positions 75 and 86 are disulfide-linked. N-linked (GlcNAc...) asparagine glycans are attached at residues asparagine 82 and asparagine 97. The C-type lectin domain occupies 82-184; that stretch reads NGSHCYYFSM…CEVALQWICK (103 aa). Disulfide bonds link cysteine 103–cysteine 183 and cysteine 162–cysteine 175.

Forms a monomer and homodimer; disulfide-linked. Interacts (via ITIM motif) with PTPN11 and INPP5D. Post-translationally, phosphorylated in response to monoclonal antibody G63 binding and antigenic stimulation. Expressed specifically on natural killer (NK) cells and activated CD8 T-cells. Not detected in spleen, thymus, lymph node, testis, brain or kidney. Not detected on mast cell lines, bone marrow-derived mast cells, or peritoneal mast cells.

The protein resides in the cell membrane. Functionally, plays an inhibitory role on natural killer (NK) cells and T-cell functions upon binding to their non-MHC ligands. May mediate missing self recognition by binding to a highly conserved site on classical cadherins, enabling it to monitor expression of E-cadherin/CDH1, N-cadherin/CDH2 and R-cadherin/CDH4 on target cells. The chain is Killer cell lectin-like receptor subfamily G member 1 (Klrg1) from Mus musculus (Mouse).